A 313-amino-acid chain; its full sequence is Sorting nexin-20 (313 aa).

Residues M1–W61 form a disordered region. At S3 the chain carries Phosphoserine. Positions P29–G38 are enriched in pro residues. Over residues G45–R55 the composition is skewed to polar residues. The 118-residue stretch at V71–E188 folds into the PX domain. A 1,2-diacyl-sn-glycero-3-phospho-(1D-myo-inositol-3-phosphate) is bound by residues R113, S115, K140, and R154.

Belongs to the sorting nexin family. As to quaternary structure, interacts with SELPLG. Interaction with SELPLG is controversial.

The protein resides in the early endosome membrane. It is found in the cell membrane. The protein localises to the cytoplasm. It localises to the nucleus. In terms of biological role, may play a role in cellular vesicle trafficking. Has been proposed to function as a sorting protein that targets SELPLG into endosomes, but has no effect on SELPLG internalization from the cell surface, or on SELPLG-mediated cell-cell adhesion. In Rattus norvegicus (Rat), this protein is Sorting nexin-20 (Snx20).